The chain runs to 60 residues: Large ribosomal subunit protein uL30 (60 aa).

It belongs to the universal ribosomal protein uL30 family. As to quaternary structure, part of the 50S ribosomal subunit.

This Lachnoclostridium phytofermentans (strain ATCC 700394 / DSM 18823 / ISDg) (Clostridium phytofermentans) protein is Large ribosomal subunit protein uL30.